The chain runs to 546 residues: Membrane protein insertase YidC (546 aa).

The chain crosses the membrane as a helical span at residues 8 to 28 (ILLATVLSVGILILWQVIFPT). Residues 31 to 70 (APPKPAHPPAAEVAKPAAPASPAPGAAAPAVPAPPPDAPE) are disordered. Positions 39–60 (PAAEVAKPAAPASPAPGAAAPA) are enriched in low complexity. The next 5 helical transmembrane spans lie at 326–346 (IDYG…LYVM), 356–376 (WGVA…PLTY), 422–442 (LGGC…YAAL), 459–479 (LTAH…SFVM), and 498–518 (FFPG…TLYI).

This sequence belongs to the OXA1/ALB3/YidC family. Type 1 subfamily. In terms of assembly, interacts with the Sec translocase complex via SecD. Specifically interacts with transmembrane segments of nascent integral membrane proteins during membrane integration.

It is found in the cell inner membrane. Functionally, required for the insertion and/or proper folding and/or complex formation of integral membrane proteins into the membrane. Involved in integration of membrane proteins that insert both dependently and independently of the Sec translocase complex, as well as at least some lipoproteins. Aids folding of multispanning membrane proteins. The chain is Membrane protein insertase YidC from Anaeromyxobacter dehalogenans (strain 2CP-1 / ATCC BAA-258).